Reading from the N-terminus, the 72-residue chain is U-poneritoxin(01)-Om7a (72 aa).

Residues 1–27 (MKPSGLTFAFLVVFMMAIMYNSVQVTA) form the signal peptide. A propeptide spanning residues 28–45 (DADADAEAEALANALAEA) is cleaved from the precursor.

The protein belongs to the formicidae venom precursor-01 superfamily. Expressed by the venom gland.

The protein resides in the secreted. Its function is as follows. Peptide with unknown function that does not resemble any other pilosulin-like peptide and appears to have a coiled coil structure. This Odontomachus monticola (Trap-jaw ant) protein is U-poneritoxin(01)-Om7a.